The chain runs to 259 residues: Proteasome subunit alpha 1 (259 aa).

The segment at 231 to 259 is disordered; that stretch reads LVPAEPAAASESAPEPKPDTETKPADTQD. Positions 233–243 are enriched in low complexity; that stretch reads PAEPAAASESA. Over residues 244–259 the composition is skewed to basic and acidic residues; sequence PEPKPDTETKPADTQD.

Belongs to the peptidase T1A family. In terms of assembly, the 20S proteasome core is composed of 14 alpha and 14 beta subunits that assemble into four stacked heptameric rings, resulting in a barrel-shaped structure. The two inner rings, each composed of seven catalytic beta subunits, are sandwiched by two outer rings, each composed of seven alpha subunits. All four combinations of alpha- and beta-subunits (beta2-alpha1, beta2-alpha2, beta1-alpha2 and beta1-alpha1) yield fully assembled and proteolytically active proteasomes. The catalytic chamber with the active sites is on the inside of the barrel. Has probably a gated structure, the ends of the cylinder being occluded by the N-termini of the alpha-subunits. Is likely capped by the proteasome-associated ATPase, ARC. The N-terminus is blocked.

The protein resides in the cytoplasm. It functions in the pathway protein degradation; proteasomal Pup-dependent pathway. Its activity is regulated as follows. The formation of the proteasomal ATPase ARC-20S proteasome complex, likely via the docking of the C-termini of ARC into the intersubunit pockets in the alpha-rings, may trigger opening of the gate for substrate entry. Interconversion between the open-gate and close-gate conformations leads to a dynamic regulation of the 20S proteasome proteolysis activity. In terms of biological role, component of the proteasome core, a large protease complex with broad specificity involved in protein degradation. The R.erythropolis proteasomes are able to cleave oligopeptides after Tyr, Phe and Leu, very poorly after Arg but not after Glu. Thus, displays chymotrypsin-like activity, low trypsin-like activity but no caspase-like activity. The chain is Proteasome subunit alpha 1 from Rhodococcus erythropolis (Arthrobacter picolinophilus).